The chain runs to 102 residues: NADH-quinone oxidoreductase subunit K (102 aa).

3 helical membrane passes run 6 to 26 (LIGMMILAAGLFAIGLFGVLA), 30 to 50 (ILFQLVALEVALSGPALAFVA), and 63 to 83 (MLILVLTLAAAEVAVGLALLL).

Belongs to the complex I subunit 4L family. In terms of assembly, NDH-1 is composed of 14 different subunits. Subunits NuoA, H, J, K, L, M, N constitute the membrane sector of the complex.

It is found in the cell inner membrane. It catalyses the reaction a quinone + NADH + 5 H(+)(in) = a quinol + NAD(+) + 4 H(+)(out). NDH-1 shuttles electrons from NADH, via FMN and iron-sulfur (Fe-S) centers, to quinones in the respiratory chain. The immediate electron acceptor for the enzyme in this species is believed to be ubiquinone. Couples the redox reaction to proton translocation (for every two electrons transferred, four hydrogen ions are translocated across the cytoplasmic membrane), and thus conserves the redox energy in a proton gradient. In Rhodopseudomonas palustris (strain HaA2), this protein is NADH-quinone oxidoreductase subunit K.